The primary structure comprises 143 residues: MFMGEYEHQLDAKGRMIIPSKFRYDLNERFIITRGLDKCLFGYTLEEWQQIEEKMKTLPMTKKDARKFMRMFFSGAIEVELDKQGRINIPQNLRKYASLTKECTVIGVSNRIEIWDRETWNDFYDESEESFEDIAEDLIDFDF.

SpoVT-AbrB domains follow at residues 5 to 47 and 76 to 119; these read EYEH…TLEE and AIEV…DRET.

Belongs to the MraZ family. In terms of assembly, forms oligomers.

It is found in the cytoplasm. The protein resides in the nucleoid. This Staphylococcus haemolyticus (strain JCSC1435) protein is Transcriptional regulator MraZ.